Reading from the N-terminus, the 429-residue chain is Serine--tRNA ligase (429 aa).

L-serine is bound at residue 235-237 (TAE). An ATP-binding site is contributed by 266–268 (RSE). Glutamate 289 is a binding site for L-serine. 353 to 356 (EISS) is an ATP binding site. Position 389 (serine 389) interacts with L-serine.

Belongs to the class-II aminoacyl-tRNA synthetase family. Type-1 seryl-tRNA synthetase subfamily. Homodimer. The tRNA molecule binds across the dimer.

It localises to the cytoplasm. It catalyses the reaction tRNA(Ser) + L-serine + ATP = L-seryl-tRNA(Ser) + AMP + diphosphate + H(+). The catalysed reaction is tRNA(Sec) + L-serine + ATP = L-seryl-tRNA(Sec) + AMP + diphosphate + H(+). Its pathway is aminoacyl-tRNA biosynthesis; selenocysteinyl-tRNA(Sec) biosynthesis; L-seryl-tRNA(Sec) from L-serine and tRNA(Sec): step 1/1. Functionally, catalyzes the attachment of serine to tRNA(Ser). Is also able to aminoacylate tRNA(Sec) with serine, to form the misacylated tRNA L-seryl-tRNA(Sec), which will be further converted into selenocysteinyl-tRNA(Sec). The polypeptide is Serine--tRNA ligase (Histophilus somni (strain 2336) (Haemophilus somnus)).